The primary structure comprises 132 residues: Cytochrome b5 (132 aa).

The Cytochrome b5 heme-binding domain occupies 2–78; it reads GKIFTLAEVA…LDEYYVGDID (77 aa). Residues His37 and His61 each coordinate heme. The chain crosses the membrane as a helical span at residues 104–124; sequence FVIKLLQFLVPLVILAGAIGI.

This sequence belongs to the cytochrome b5 family.

It localises to the endoplasmic reticulum membrane. It is found in the microsome membrane. Membrane bound hemoprotein which function as an electron carrier for several membrane bound oxygenases. The polypeptide is Cytochrome b5 (Borago officinalis (Bourrache)).